Here is a 761-residue protein sequence, read N- to C-terminus: Zinc finger protein 287 (761 aa).

In terms of domain architecture, SCAN box spans arginine 49–leucine 131. A disordered region spans residues glutamate 134–histidine 154. The KRAB domain occupies methionine 170 to proline 238. C2H2-type zinc fingers lie at residues tyrosine 368–histidine 390, tyrosine 396–histidine 418, tyrosine 424–histidine 446, tyrosine 452–histidine 474, tyrosine 480–histidine 502, tyrosine 508–histidine 530, tyrosine 536–histidine 558, tyrosine 564–histidine 586, tyrosine 592–histidine 614, tyrosine 620–histidine 642, phenylalanine 648–histidine 670, tyrosine 676–histidine 698, tyrosine 704–histidine 726, and tyrosine 732–histidine 754.

It belongs to the krueppel C2H2-type zinc-finger protein family.

The protein localises to the nucleus. May be involved in transcriptional regulation. In Homo sapiens (Human), this protein is Zinc finger protein 287.